A 239-amino-acid polypeptide reads, in one-letter code: Ribonuclease PH (239 aa).

Phosphate contacts are provided by residues R86 and 124–126 (GTR).

The protein belongs to the RNase PH family. As to quaternary structure, homohexameric ring arranged as a trimer of dimers.

The catalysed reaction is tRNA(n+1) + phosphate = tRNA(n) + a ribonucleoside 5'-diphosphate. Phosphorolytic 3'-5' exoribonuclease that plays an important role in tRNA 3'-end maturation. Removes nucleotide residues following the 3'-CCA terminus of tRNAs; can also add nucleotides to the ends of RNA molecules by using nucleoside diphosphates as substrates, but this may not be physiologically important. Probably plays a role in initiation of 16S rRNA degradation (leading to ribosome degradation) during starvation. The sequence is that of Ribonuclease PH from Aromatoleum aromaticum (strain DSM 19018 / LMG 30748 / EbN1) (Azoarcus sp. (strain EbN1)).